We begin with the raw amino-acid sequence, 404 residues long: 6-hydroxytryptophan 2,3-dioxygenase fscD (404 aa).

Residue His-341 coordinates heme b.

This sequence belongs to the indoleamine 2,3-dioxygenase family. It depends on heme as a cofactor.

It functions in the pathway secondary metabolite biosynthesis. 6-hydroxytryptophan 2,3-dioxygenase; part of the fragmented gene cluster that mediates the biosynthesis of fusarochromene, a tryptophan-derived metabolite closely related to a group of mycotoxins including fusarochromanone. Within the pathway, fscD is responsible of the cleavage of the pyrrole ring of 6-hydroxytryptophan. The first step of the pathway is the epimerization of L-tryptophan to D-tryptophan in the presence of the NRPS-like tryptophan epimerase fscC. D-tryptophan is subsequently hydroxylated by the tryptophan 6-hydroxylase fscE to yield 6-hydroxytryptophan. The pyrrole ring undergoes cleavaged by the tryptophan 2,3-dioxygenase fscD and is finally converted to 4-hydroxykyrunenine by the hydrolase fscH. The NRPS-like oxidoreductase fscA reduces the carboxyl group to primary alcohol and the DMATS-type prenyltransferase fscG performs prenylation, followed by the formation of a chromene ring catalyzed by the oxidoreductase fscI, which leads to desacetylfusarochromene. Epoxidation by fscF and rearrangement reactions of chromene double bonds convert compound desacetylfusarochromene to fusarochromanones. Although specific acetyltransferases were not found near the fsc gene cluster, several predicted enzymes containing the N-acetyltransferase superfamily domain are present in the genome of F.equiseti. These predicted enzymes may have the potential to convert desacetylfusarochromene to fusarochromene. This chain is 6-hydroxytryptophan 2,3-dioxygenase fscD, found in Fusarium equiseti (Fusarium scirpi).